The primary structure comprises 340 residues: Ketol-acid reductoisomerase (NADP(+)) (340 aa).

Residues 3–183 (LPIYYDKDCD…GGGRTGIIHT (181 aa)) enclose the KARI N-terminal Rossmann domain. Residues 26-29 (FGSQ), serine 54, and 84-87 (DEIQ) each bind NADP(+). The active site involves histidine 109. Glycine 135 contacts NADP(+). The KARI C-terminal knotted domain maps to 184–329 (TFKDETETDL…KRLRAMMPWI (146 aa)). 4 residues coordinate Mg(2+): aspartate 192, glutamate 196, glutamate 228, and glutamate 232. Serine 253 provides a ligand contact to substrate.

Belongs to the ketol-acid reductoisomerase family. Mg(2+) serves as cofactor.

The enzyme catalyses (2R)-2,3-dihydroxy-3-methylbutanoate + NADP(+) = (2S)-2-acetolactate + NADPH + H(+). It catalyses the reaction (2R,3R)-2,3-dihydroxy-3-methylpentanoate + NADP(+) = (S)-2-ethyl-2-hydroxy-3-oxobutanoate + NADPH + H(+). It functions in the pathway amino-acid biosynthesis; L-isoleucine biosynthesis; L-isoleucine from 2-oxobutanoate: step 2/4. The protein operates within amino-acid biosynthesis; L-valine biosynthesis; L-valine from pyruvate: step 2/4. In terms of biological role, involved in the biosynthesis of branched-chain amino acids (BCAA). Catalyzes an alkyl-migration followed by a ketol-acid reduction of (S)-2-acetolactate (S2AL) to yield (R)-2,3-dihydroxy-isovalerate. In the isomerase reaction, S2AL is rearranged via a Mg-dependent methyl migration to produce 3-hydroxy-3-methyl-2-ketobutyrate (HMKB). In the reductase reaction, this 2-ketoacid undergoes a metal-dependent reduction by NADPH to yield (R)-2,3-dihydroxy-isovalerate. The polypeptide is Ketol-acid reductoisomerase (NADP(+)) (Nitratiruptor sp. (strain SB155-2)).